The primary structure comprises 193 residues: Corrinoid adenosyltransferase (193 aa).

Residues 5–13 (TKTGDKGQT), lysine 22, 130–135 (RRAERR), and asparagine 154 each bind ATP.

It belongs to the Cob(I)alamin adenosyltransferase family. As to quaternary structure, homotrimer.

It is found in the cytoplasm. The catalysed reaction is 2 cob(II)yrinate a,c diamide + reduced [electron-transfer flavoprotein] + 2 ATP = 2 adenosylcob(III)yrinate a,c-diamide + 2 triphosphate + oxidized [electron-transfer flavoprotein] + 3 H(+). It catalyses the reaction 2 cob(II)alamin + reduced [electron-transfer flavoprotein] + 2 ATP = 2 adenosylcob(III)alamin + 2 triphosphate + oxidized [electron-transfer flavoprotein] + 3 H(+). Its pathway is cofactor biosynthesis; adenosylcobalamin biosynthesis; adenosylcobalamin from cob(II)yrinate a,c-diamide: step 2/7. This chain is Corrinoid adenosyltransferase (yvqK), found in Bacillus subtilis (strain 168).